A 197-amino-acid chain; its full sequence is Imidazoleglycerol-phosphate dehydratase (197 aa).

The protein belongs to the imidazoleglycerol-phosphate dehydratase family.

The protein resides in the cytoplasm. The enzyme catalyses D-erythro-1-(imidazol-4-yl)glycerol 3-phosphate = 3-(imidazol-4-yl)-2-oxopropyl phosphate + H2O. It participates in amino-acid biosynthesis; L-histidine biosynthesis; L-histidine from 5-phospho-alpha-D-ribose 1-diphosphate: step 6/9. This is Imidazoleglycerol-phosphate dehydratase (hisB) from Streptomyces coelicolor (strain ATCC BAA-471 / A3(2) / M145).